The following is a 444-amino-acid chain: Tol-Pal system protein TolB (444 aa).

Residues 1-19 form the signal peptide; sequence MRNIIYFILSLLFSVTSYA.

The protein belongs to the TolB family. In terms of assembly, the Tol-Pal system is composed of five core proteins: the inner membrane proteins TolA, TolQ and TolR, the periplasmic protein TolB and the outer membrane protein Pal. They form a network linking the inner and outer membranes and the peptidoglycan layer.

It is found in the periplasm. Functionally, part of the Tol-Pal system, which plays a role in outer membrane invagination during cell division and is important for maintaining outer membrane integrity. The sequence is that of Tol-Pal system protein TolB from Rickettsia peacockii (strain Rustic).